A 444-amino-acid chain; its full sequence is MTTEKEMKQIQNEFKERMDEGELLNCMRCGFCLPSCPTYIESGFQETHSPRGRIALMKAVADGMIEPDEDVERSLSLCLGCRACEPVCPSGVKYGQLLEEARDIIHQNKKHSLGERVMRKTAFHELFPHQNRMRSAVSLIGLYQRSGLQTAVRKSGMLRVLPEHLRTMEAVLPDVPKSKDMKHRPRFLPSIGPMKKRVAFFSGCLMDTMFLPTNNATLKLLQLAGCDIVIPPEQACCGALHGHSGEKNTGKELAKQNIAAFEALDVDAVITNAGGCGAFLTEYDHLLKDDPEWSERAAAFVQKLKDFSSVLVELDFHQMDLALETPQVVTYQDSCHLRNVMHTSLEPRQLLKSIKGAEFKEMEKADSCCGSAGIYNIVEVEMSMKILDSKMAAVKATEAILIVTANPGCLLQMKLGIEREGLSGKVRAVHLADLLLEAAGHKTS.

4Fe-4S ferredoxin-type domains follow at residues 14–46 (FKERMDEGELLNCMRCGFCLPSCPTYIESGFQE) and 69–100 (EDVERSLSLCLGCRACEPVCPSGVKYGQLLEE). The [4Fe-4S] cluster site is built by C26, C29, C32, C36, C78, C81, C84, and C88.

The glycolate oxidase likely consists of several subunits including GlcD and GlcF. [4Fe-4S] cluster is required as a cofactor.

It is found in the cell membrane. The catalysed reaction is glycolate + A = glyoxylate + AH2. The enzyme catalyses (R)-lactate + A = pyruvate + AH2. Functionally, component of a complex that catalyzes the oxidation of glycolate to glyoxylate. Is also able to oxidize D-lactate ((R)-lactate). Does not link directly to O(2), and 2,6-dichloroindophenol (DCIP) and phenazine methosulfate (PMS) can act as artificial electron acceptors in vitro, but the physiological molecule that functions as primary electron acceptor during glycolate oxidation is unknown. This chain is Probable glycolate oxidase iron-sulfur subunit (glcF), found in Bacillus subtilis (strain 168).